Consider the following 349-residue polypeptide: Phenylalanine--tRNA ligase alpha subunit (349 aa).

Glu262 serves as a coordination point for Mg(2+).

The protein belongs to the class-II aminoacyl-tRNA synthetase family. Phe-tRNA synthetase alpha subunit type 1 subfamily. In terms of assembly, tetramer of two alpha and two beta subunits. The cofactor is Mg(2+).

It localises to the cytoplasm. The catalysed reaction is tRNA(Phe) + L-phenylalanine + ATP = L-phenylalanyl-tRNA(Phe) + AMP + diphosphate + H(+). The protein is Phenylalanine--tRNA ligase alpha subunit of Sorangium cellulosum (strain So ce56) (Polyangium cellulosum (strain So ce56)).